Consider the following 155-residue polypeptide: Ribosomal RNA large subunit methyltransferase H (155 aa).

S-adenosyl-L-methionine is bound by residues L72, G103, and 122–127 (LSPLTL).

Belongs to the RNA methyltransferase RlmH family. In terms of assembly, homodimer.

Its subcellular location is the cytoplasm. It carries out the reaction pseudouridine(1915) in 23S rRNA + S-adenosyl-L-methionine = N(3)-methylpseudouridine(1915) in 23S rRNA + S-adenosyl-L-homocysteine + H(+). Specifically methylates the pseudouridine at position 1915 (m3Psi1915) in 23S rRNA. This chain is Ribosomal RNA large subunit methyltransferase H, found in Aeromonas salmonicida (strain A449).